The chain runs to 285 residues: RNA polymerase sigma factor RpoH (285 aa).

The segment at 53–122 is sigma-70 factor domain-2; the sequence is LILSHLRFVA…IHEYVLRNWR (70 aa). The short motif at 77–80 is the Interaction with polymerase core subunit RpoC element; it reads DLIQ. The interval 229–281 is sigma-70 factor domain-4; it reads ALEGLDERSQHIIRARWLDDDNKSTLQELADQYGVSAERVRQLEKNAMKKLKM. Positions 254-273 form a DNA-binding region, H-T-H motif; that stretch reads LQELADQYGVSAERVRQLEK.

This sequence belongs to the sigma-70 factor family. RpoH subfamily. In terms of assembly, interacts with the RNA polymerase core enzyme.

It localises to the cytoplasm. Sigma factors are initiation factors that promote the attachment of RNA polymerase to specific initiation sites and are then released. This sigma factor is involved in regulation of expression of heat shock genes. The protein is RNA polymerase sigma factor RpoH of Serratia marcescens.